The following is a 328-amino-acid chain: UPF0194 membrane protein YE2891 (328 aa).

A signal peptide spans 1-22 (MNRKKIIVAVVIVALLAAIGYG). Coiled coils occupy residues 80–109 (YVNA…REEE) and 139–208 (ANKA…TTLL).

This sequence belongs to the UPF0194 family.

It is found in the periplasm. The chain is UPF0194 membrane protein YE2891 from Yersinia enterocolitica serotype O:8 / biotype 1B (strain NCTC 13174 / 8081).